The chain runs to 350 residues: Putative zinc metalloprotease jhp_0242 (350 aa).

His-16 is a binding site for Zn(2+). The active site involves Glu-17. Zn(2+) is bound at residue His-20. The next 5 membrane-spanning stretches (helical) occupy residues 43 to 63, 94 to 114, 249 to 269, 277 to 297, and 326 to 346; these read WFFKLFGTQFALSLIPLGGYV, LWILFGGAFFNFLFAVLVYFF, LIMGSASVKELSGVIGIVGAL, MLLLFGAFLSINLGILNLLPI, and LWLVGVGFLVFVMFLGLFNDI. Residues 108-177 enclose the PDZ domain; sequence AVLVYFFLAL…GELILEIERN (70 aa).

This sequence belongs to the peptidase M50B family. The cofactor is Zn(2+).

Its subcellular location is the cell inner membrane. In Helicobacter pylori (strain J99 / ATCC 700824) (Campylobacter pylori J99), this protein is Putative zinc metalloprotease jhp_0242.